A 392-amino-acid polypeptide reads, in one-letter code: Potassium/proton antiporter CemA (392 aa).

The next 4 membrane-spanning stretches (helical) occupy residues 174–194, 269–289, 316–336, and 352–372; these read FLAS…VWWL, SLAN…MLSL, FLIL…WEVI, and FIFM…KYWI.

This sequence belongs to the CemA family.

It localises to the plastid. The protein localises to the chloroplast inner membrane. The catalysed reaction is K(+)(in) + H(+)(out) = K(+)(out) + H(+)(in). Contributes to K(+)/H(+) antiport activity by supporting proton efflux to control proton extrusion and homeostasis in chloroplasts in a light-dependent manner to modulate photosynthesis. Prevents excessive induction of non-photochemical quenching (NPQ) under continuous-light conditions. Indirectly promotes efficient inorganic carbon uptake into chloroplasts. The chain is Potassium/proton antiporter CemA from Nephroselmis olivacea (Green alga).